A 1007-amino-acid chain; its full sequence is Probable beta-galactosidase A (1007 aa).

The first 18 residues, 1 to 18 (MKLSSACAIALLAAQAAG), serve as a signal peptide directing secretion. Tyrosine 96, asparagine 140, alanine 141, and glutamate 142 together coordinate substrate. Asparagine 156 carries an N-linked (GlcNAc...) asparagine glycan. Position 199 (asparagine 199) interacts with substrate. Residue glutamate 200 is the Proton donor of the active site. Cysteine 205 and cysteine 206 form a disulfide bridge. Substrate is bound at residue tyrosine 260. Cysteine 266 and cysteine 315 are disulfide-bonded. Catalysis depends on glutamate 298, which acts as the Nucleophile. Residue tyrosine 364 participates in substrate binding. N-linked (GlcNAc...) asparagine glycosylation is found at asparagine 373, asparagine 402, asparagine 422, asparagine 478, asparagine 522, asparagine 622, asparagine 739, asparagine 760, asparagine 777, and asparagine 805. Residues 862-881 (RQGFHQPEPPSQDWKSSSPL) form a disordered region. Asparagine 914 is a glycosylation site (N-linked (GlcNAc...) asparagine).

The protein belongs to the glycosyl hydrolase 35 family.

The protein localises to the secreted. The catalysed reaction is Hydrolysis of terminal non-reducing beta-D-galactose residues in beta-D-galactosides.. Functionally, cleaves beta-linked terminal galactosyl residues from gangliosides, glycoproteins, and glycosaminoglycans. This is Probable beta-galactosidase A (lacA) from Aspergillus phoenicis (Aspergillus saitoi).